Reading from the N-terminus, the 472-residue chain is Glycogen synthase (472 aa).

Lysine 16 is a binding site for ADP-alpha-D-glucose.

It belongs to the glycosyltransferase 1 family. Bacterial/plant glycogen synthase subfamily.

It carries out the reaction [(1-&gt;4)-alpha-D-glucosyl](n) + ADP-alpha-D-glucose = [(1-&gt;4)-alpha-D-glucosyl](n+1) + ADP + H(+). The protein operates within glycan biosynthesis; glycogen biosynthesis. Functionally, synthesizes alpha-1,4-glucan chains using ADP-glucose. The polypeptide is Glycogen synthase (Jannaschia sp. (strain CCS1)).